The chain runs to 498 residues: ATP synthase subunit beta, chloroplastic (498 aa).

172–179 (GGAGVGKT) is an ATP binding site.

It belongs to the ATPase alpha/beta chains family. As to quaternary structure, F-type ATPases have 2 components, CF(1) - the catalytic core - and CF(0) - the membrane proton channel. CF(1) has five subunits: alpha(3), beta(3), gamma(1), delta(1), epsilon(1). CF(0) has four main subunits: a(1), b(1), b'(1) and c(9-12).

The protein localises to the plastid. It localises to the chloroplast thylakoid membrane. The catalysed reaction is ATP + H2O + 4 H(+)(in) = ADP + phosphate + 5 H(+)(out). Functionally, produces ATP from ADP in the presence of a proton gradient across the membrane. The catalytic sites are hosted primarily by the beta subunits. The protein is ATP synthase subunit beta, chloroplastic of Lolium perenne (Perennial ryegrass).